The chain runs to 168 residues: ATP synthase subunit b (168 aa).

Residues 9 to 29 (AIPFGTIAYTLFIFLILLVML) form a helical membrane-spanning segment.

It belongs to the ATPase B chain family. In terms of assembly, F-type ATPases have 2 components, F(1) - the catalytic core - and F(0) - the membrane proton channel. F(1) has five subunits: alpha(3), beta(3), gamma(1), delta(1), epsilon(1). F(0) has three main subunits: a(1), b(2) and c(10-14). The alpha and beta chains form an alternating ring which encloses part of the gamma chain. F(1) is attached to F(0) by a central stalk formed by the gamma and epsilon chains, while a peripheral stalk is formed by the delta and b chains.

The protein localises to the cell membrane. F(1)F(0) ATP synthase produces ATP from ADP in the presence of a proton or sodium gradient. F-type ATPases consist of two structural domains, F(1) containing the extramembraneous catalytic core and F(0) containing the membrane proton channel, linked together by a central stalk and a peripheral stalk. During catalysis, ATP synthesis in the catalytic domain of F(1) is coupled via a rotary mechanism of the central stalk subunits to proton translocation. In terms of biological role, component of the F(0) channel, it forms part of the peripheral stalk, linking F(1) to F(0). The protein is ATP synthase subunit b of Bacillus cereus (strain G9842).